A 261-amino-acid polypeptide reads, in one-letter code: Succinate dehydrogenase [ubiquinone] iron-sulfur subunit, mitochondrial (261 aa).

The 2Fe-2S ferredoxin-type domain occupies 31–122 (FKIYRWNPDT…DVKIYPLPHM (92 aa)). [2Fe-2S] cluster contacts are provided by C82, C87, C90, and C102. The region spanning 164 to 194 (DRKKLDGLYECILCACCSTACPSYWWNNEQY) is the 4Fe-4S ferredoxin-type domain. [4Fe-4S] cluster is bound by residues C174, C177, and C180. Residue C184 participates in [3Fe-4S] cluster binding. W189 lines the a ubiquinone pocket. Residues C231 and C237 each contribute to the [3Fe-4S] cluster site. C241 contacts [4Fe-4S] cluster.

It belongs to the succinate dehydrogenase/fumarate reductase iron-sulfur protein family. Component of complex II composed of four subunits: a flavoprotein (FP), an iron-sulfur protein (IP), and a cytochrome b composed of a large and a small subunit. The cofactor is [2Fe-2S] cluster. Requires [3Fe-4S] cluster as cofactor. [4Fe-4S] cluster is required as a cofactor.

It is found in the mitochondrion inner membrane. The catalysed reaction is a quinone + succinate = fumarate + a quinol. Its pathway is carbohydrate metabolism; tricarboxylic acid cycle; fumarate from succinate (eukaryal route): step 1/1. Functionally, iron-sulfur protein (IP) subunit of succinate dehydrogenase (SDH) that is involved in complex II of the mitochondrial electron transport chain and is responsible for transferring electrons from succinate to ubiquinone (coenzyme Q). The protein is Succinate dehydrogenase [ubiquinone] iron-sulfur subunit, mitochondrial (SDH2) of Eremothecium gossypii (strain ATCC 10895 / CBS 109.51 / FGSC 9923 / NRRL Y-1056) (Yeast).